The sequence spans 361 residues: Protein RecA (361 aa).

77-84 (GPESSGKT) serves as a coordination point for ATP.

This sequence belongs to the RecA family.

The protein resides in the cytoplasm. Functionally, can catalyze the hydrolysis of ATP in the presence of single-stranded DNA, the ATP-dependent uptake of single-stranded DNA by duplex DNA, and the ATP-dependent hybridization of homologous single-stranded DNAs. It interacts with LexA causing its activation and leading to its autocatalytic cleavage. The chain is Protein RecA from Sinorhizobium fredii (strain NBRC 101917 / NGR234).